The sequence spans 623 residues: Cell pattern formation-associated protein stuA (623 aa).

Over residues 13-31 the composition is skewed to polar residues; it reads QHMQSAGQPQQPQTVTSGP. Residues 13–111 form a disordered region; sequence QHMQSAGQPQ…DTTGQHPPPG (99 aa). An HTH APSES-type domain is found at 115–221; sequence RVTATLWEDE…HNIGALLYHP (107 aa). A DNA-binding region (H-T-H motif) is located at residues 149–170; the sequence is GTKLLNVAGMTRGRRDGILKSE. Disordered regions lie at residues 232 to 270 and 332 to 623; these read AAAERRKQDQGQMRTPPAGLPSIQHQPHNSMALPGPQSS and ARSM…PRQR. The segment covering 335-374 has biased composition (polar residues); sequence MPTTPATTPPGSMQPYGSAQSFDGSRQQMYNAPSQQSPYP. Positions 396–408 are enriched in low complexity; sequence GPPSSRPSGSAPS. Residues 423 to 446 are compositionally biased toward basic and acidic residues; that stretch reads EHGHQSHAGEEDGEHEQHDAEYTH. The span at 542–553 shows a compositional bias: low complexity; the sequence is APPADMANPMPN. Positions 569-594 are nuclear localization domain; that stretch reads KRGREGDDDLSRPVGDVPGMDMKRRK. The span at 570-579 shows a compositional bias: basic and acidic residues; it reads RGREGDDDLS.

The protein belongs to the EFG1/PHD1/stuA family.

It is found in the nucleus. Transcription factor that regulates asexual reproduction. Binds the StuA-response elements (StRE) with the consensus sequence 5'-(A/T)CGCG(T/A)N(A/C)-3' at the promoters of target genes. Controls conidiation by positively regulating the expression of brlA and abaA. Positively regulates the cephalosporin biosynthesis gene cluster. Also involved hyphal fragmentation and cell wall integrity. This chain is Cell pattern formation-associated protein stuA, found in Hapsidospora chrysogenum (strain ATCC 11550 / CBS 779.69 / DSM 880 / IAM 14645 / JCM 23072 / IMI 49137) (Acremonium chrysogenum).